An 837-amino-acid chain; its full sequence is Phenylalanine--tRNA ligase beta subunit (837 aa).

The 111-residue stretch at 39-149 (SASLEGIVTG…EMNIAIPKIG (111 aa)) folds into the tRNA-binding domain. The 106-residue stretch at 415-520 (IEEQLLLLRR…RLIGYDRFDS (106 aa)) folds into the B5 domain. Mg(2+)-binding residues include D498, D504, E507, and E508. The FDX-ACB domain occupies 743-836 (PTVPSMERDI…LKVEFSAELR (94 aa)).

This sequence belongs to the phenylalanyl-tRNA synthetase beta subunit family. Type 1 subfamily. As to quaternary structure, tetramer of two alpha and two beta subunits. Requires Mg(2+) as cofactor.

It is found in the cytoplasm. The enzyme catalyses tRNA(Phe) + L-phenylalanine + ATP = L-phenylalanyl-tRNA(Phe) + AMP + diphosphate + H(+). The chain is Phenylalanine--tRNA ligase beta subunit from Prochlorococcus marinus (strain SARG / CCMP1375 / SS120).